Consider the following 687-residue polypeptide: Carboxysome assembly protein CcmM (687 aa).

Positions 242 to 327 are rbcS-like repeat 1, SSUL1; that stretch reads SINSDITNQI…RVVEVIIQRP (86 aa). Disordered regions lie at residues 328 to 355 and 442 to 476; these read GDVP…SAVA and VHRP…SSAG. Polar residues predominate over residues 335-346; that stretch reads SRGTTTTKALSS. Residues 366–445 are rbcS-like repeat 2, SSUL2; it reads ANQLRALLHQ…RVAEIVVHRP (80 aa). Over residues 451–472 the composition is skewed to low complexity; that stretch reads GKPSSSSSSVGYKSAPVSSAGG. The interval 480–562 is rbcS-like repeat 3, SSUL3; sequence PEVIATVRGL…RVLEQIIQRP (83 aa). Positions 565-590 are disordered; sequence NVVAGRSPSSSSASTSSSASSNGFGS. The segment covering 568 to 587 has biased composition (low complexity); the sequence is AGRSPSSSSASTSSSASSNG. The segment at 599 to 687 is rbcS-like repeat 4, SSUL4; it reads SAVRLDNSVV…RVLETIIQRP (89 aa).

It belongs to the gamma-class carbonic anhydrase family. Probably forms homotrimers. Full length CcmM interacts with CcaA, CcmK1, CcmK2, CcmK4, CcmL, CcmN and itself, while the N-terminus of CcmM (first 249 residues) only interacts with CcaA, CcmM and CcmN. A probable CcmM-CcaA-CcmN complex as well as a CcaA-RuBisCO-CcmM complex can also be isolated. Interacts with full-length CcaA and the first 220 residues of CcaA; surface residues Gln-177 to Gln-188 are responsible in part for binding. Multiple forms of the protein of 73 (full length), 62, 52 (the most predominant form) and 36 kDa are seen even in the presence of protease inhibitors. CcmM52 interacts with CcaA.

It localises to the carboxysome. In terms of biological role, functions as a scaffold protein for the assembly of beta-carboxysomes, initiates carboxysome assembly via its N-terminal domain binding to CcaA, CcmK and CcmL. Binds HCO(3)-, suggesting it may play a role in the activity or regulation of bicarbonate dehydration. Also initiates carboxysome assembly by coalescing RuBisCO (ribulose bisphosphate carboxylase, rbcL-rbcS) via its SSU-like domains. Produced as a full-length and a shorter form; both forms are required for correct carboxysome assembly and growth. Despite its strong similarity to gamma-class carbonic anhydrase (CA) it does not have detectable CA activity. Functionally, beta-carboxysome assembly initiates when soluble RuBisCO is condensed into a liquid matrix in a pre-carboxysome by the RbcS-like domains of probably both forms of CcmM. CcmN interacts with the N-terminus of full length CcmM, and then recruits the shell proteins (CcmK) via CcmN's encapsulation peptide. CcmM73 also interacts with CcmK proteins and CcmL directly. Shell formation requires CcmK proteins and CcmO. CcmL caps the otherwise elongated carboxysome. Once fully encapsulated carboxysomes are formed, they migrate within the cell probably via interactions with the cytoskeleton. In Synechocystis sp. (strain ATCC 27184 / PCC 6803 / Kazusa), this protein is Carboxysome assembly protein CcmM.